The following is a 398-amino-acid chain: Elongation factor Tu (398 aa).

Residues 10–207 (KPHVNIGTIG…TVDEYIPEPE (198 aa)) enclose the tr-type G domain. A G1 region spans residues 19-26 (GHVDHGKT). 19-26 (GHVDHGKT) serves as a coordination point for GTP. Mg(2+) is bound at residue threonine 26. The tract at residues 63-67 (GITIN) is G2. A G3 region spans residues 84–87 (DAPG). GTP contacts are provided by residues 84-88 (DAPGH) and 139-142 (NKVD). The segment at 139–142 (NKVD) is G4. A G5 region spans residues 177–179 (SAL).

The protein belongs to the TRAFAC class translation factor GTPase superfamily. Classic translation factor GTPase family. EF-Tu/EF-1A subfamily. As to quaternary structure, monomer.

The protein localises to the cytoplasm. The catalysed reaction is GTP + H2O = GDP + phosphate + H(+). In terms of biological role, GTP hydrolase that promotes the GTP-dependent binding of aminoacyl-tRNA to the A-site of ribosomes during protein biosynthesis. In Streptococcus suis (strain 98HAH33), this protein is Elongation factor Tu.